The chain runs to 526 residues: Amino acid transporter heavy chain SLC3A2 (526 aa).

The segment at 1 to 31 (MSQDTEVDMKDVELNELEPEKQPMNAADGAA) is disordered. Over 1 to 75 (MSQDTEVDMK…AGSPGWVRTR (75 aa)) the chain is Cytoplasmic. S2 carries the phosphoserine modification. Phosphothreonine is present on T5. A compositionally biased stretch (basic and acidic residues) spans 7–21 (VDMKDVELNELEPEK). K42 is covalently cross-linked (Glycyl lysine isopeptide (Lys-Gly) (interchain with G-Cter in ubiquitin)). Residue S58 is modified to Phosphoserine. A Glycyl lysine isopeptide (Lys-Gly) (interchain with G-Cter in SUMO2) cross-link involves residue K59. Residues 76 to 99 (WALLLLFWLGWLGMLAGAVVIIVR) form a helical; Signal-anchor for type II membrane protein membrane-spanning segment. At 100-526 (APRCRELPVQ…GLLLQFPFVA (427 aa)) the chain is on the extracellular side. N-linked (GlcNAc...) asparagine glycans are attached at residues N166, N259, and N263. S300 carries the post-translational modification Phosphoserine. N-linked (GlcNAc...) asparagine glycosylation occurs at N301. A Phosphoserine modification is found at S302. 3 N-linked (GlcNAc...) asparagine glycosylation sites follow: N318, N385, and N399. S420 is modified (phosphoserine). An N-linked (GlcNAc...) asparagine glycan is attached at N509.

This sequence belongs to the SLC3A transporter family. Disulfide-linked heterodimer with a non-glycosylated light chain (SLC7A5, SLC7A6, SLC7A7, SLC7A8, SLC7A10 or SLC7A11). Interacts with TLCD3A/CT120 and ICAM1. Constitutively and specifically associates with beta-1 integrins (alpha-2/beta-1, alpha-3/beta-1, alpha-5/beta-1 and alpha-6/beta-1), but minimally with alpha-4/beta-1. Interacts with LAPTM4B; recruits SLC3A2 and SLC7A5 to lysosomes to promote leucine uptake into these organelles and is required for mTORC1 activation. Post-translationally, phosphorylation on Ser-300 or Ser-302 and on Ser-420 by ecto-protein kinases favors heterotypic cell-cell interactions. N-glycosylated; N-glycosylation is crucial for trafficking and stability of SLC3A2 to the plasma membrane. In terms of tissue distribution, detected on the surface of embryonic epithelial cells in the epidermis, thymus, kidney, intestine, brain choroid plexus, and in retina. Detected in adult and embryonic brain, spleen, kidney, intestine and liver, and in adult testis (at protein level). Observed in all adult tissues tested with strongest expression in kidney, small intestine, spleen, thymus and liver. Moderate expression in brain, stomach, heart, testis, lung, skin, pancreas and skeletal muscle. In brain expressed on capillary endothelia in cerebral cortex.

The protein localises to the apical cell membrane. The protein resides in the cell membrane. It localises to the cell junction. Its subcellular location is the lysosome membrane. It is found in the melanosome. The protein localises to the basolateral cell membrane. Functionally, acts as a chaperone that facilitates biogenesis and trafficking of functional transporters heterodimers to the plasma membrane. Forms heterodimer with SLC7 family transporters (SLC7A5, SLC7A6, SLC7A7, SLC7A8, SLC7A10 and SLC7A11), a group of amino-acid antiporters. Heterodimers function as amino acids exchangers, the specificity of the substrate depending on the SLC7A subunit. Heterodimers SLC3A2/SLC7A6 or SLC3A2/SLC7A7 mediate the uptake of dibasic amino acids. Heterodimer SLC3A2/SLC7A11 functions as an antiporter by mediating the exchange of extracellular anionic L-cystine and intracellular L-glutamate across the cellular plasma membrane. SLC3A2/SLC7A10 translocates small neutral L- and D-amino acids across the plasma membrane. SLC3A2/SLC75 or SLC3A2/SLC7A8 translocates neutral amino acids with broad specificity, thyroid hormones and L-DOPA. SLC3A2 is essential for plasma membrane localization, stability, and the transport activity of SLC7A5 and SLC7A8. When associated with LAPTM4B, the heterodimer SLC7A5 is recruited to lysosomes to promote leucine uptake into these organelles, and thereby mediates mTORC1 activation. Modulates integrin-related signaling and is essential for integrin-dependent cell spreading, migration and tumor progression. In Mus musculus (Mouse), this protein is Amino acid transporter heavy chain SLC3A2.